We begin with the raw amino-acid sequence, 750 residues long: Photosystem I P700 chlorophyll a apoprotein A1 (750 aa).

The next 8 membrane-spanning stretches (helical) occupy residues 70 to 93 (VFSA…FHGA), 156 to 179 (LYCT…FHYH), 195 to 219 (LNHH…HVSL), 291 to 309 (IAHH…GHMY), 346 to 369 (WHAQ…HHMY), 385 to 411 (LSLF…IFMV), 433 to 455 (AIIS…LYIH), and 531 to 549 (FLVH…LILL). [4Fe-4S] cluster-binding residues include Cys-573 and Cys-582. Transmembrane regions (helical) follow at residues 589–610 (HVFL…HFSW) and 664–686 (LSAY…MFLF). His-675 provides a ligand contact to chlorophyll a'. Chlorophyll a-binding residues include Met-683 and Tyr-691. Trp-692 is a binding site for phylloquinone. Residues 724–744 (AVGVTHYLLGGIATTWAFFLA) form a helical membrane-spanning segment.

It belongs to the PsaA/PsaB family. The PsaA/B heterodimer binds the P700 chlorophyll special pair and subsequent electron acceptors. PSI consists of a core antenna complex that captures photons, and an electron transfer chain that converts photonic excitation into a charge separation. The eukaryotic PSI reaction center is composed of at least 11 subunits. P700 is a chlorophyll a/chlorophyll a' dimer, A0 is one or more chlorophyll a, A1 is one or both phylloquinones and FX is a shared 4Fe-4S iron-sulfur center. is required as a cofactor.

Its subcellular location is the plastid. The protein resides in the chloroplast thylakoid membrane. It carries out the reaction reduced [plastocyanin] + hnu + oxidized [2Fe-2S]-[ferredoxin] = oxidized [plastocyanin] + reduced [2Fe-2S]-[ferredoxin]. PsaA and PsaB bind P700, the primary electron donor of photosystem I (PSI), as well as the electron acceptors A0, A1 and FX. PSI is a plastocyanin-ferredoxin oxidoreductase, converting photonic excitation into a charge separation, which transfers an electron from the donor P700 chlorophyll pair to the spectroscopically characterized acceptors A0, A1, FX, FA and FB in turn. Oxidized P700 is reduced on the lumenal side of the thylakoid membrane by plastocyanin. The polypeptide is Photosystem I P700 chlorophyll a apoprotein A1 (Amborella trichopoda).